The primary structure comprises 290 residues: Membrane protein insertase YidC (290 aa).

The signal sequence occupies residues 1 to 19 (MKKKTLLPLFLGIMVFLAG). Residue cysteine 20 is the site of N-palmitoyl cysteine attachment. The S-diacylglycerol cysteine moiety is linked to residue cysteine 20. 5 consecutive transmembrane segments (helical) span residues 56-76 (YGLA…PFML), 134-154 (MLGC…YFVL), 176-196 (PDIW…YVSS), 207-224 (GYMM…ISLS), and 229-251 (LGLY…NIYY). The interval 270–290 (HNGGSNKKGKNTQVVSKKKKK) is disordered.

It belongs to the OXA1/ALB3/YidC family. Type 2 subfamily.

Its subcellular location is the cell membrane. Required for the insertion and/or proper folding and/or complex formation of integral membrane proteins into the membrane. Involved in integration of membrane proteins that insert both dependently and independently of the Sec translocase complex, as well as at least some lipoproteins. This is Membrane protein insertase YidC from Staphylococcus aureus (strain MRSA252).